A 673-amino-acid polypeptide reads, in one-letter code: Methionine--tRNA ligase (673 aa).

Residues 15-25 (PYANGPIHLGH) carry the 'HIGH' region motif. Zn(2+) is bound by residues Cys-146, Cys-149, Cys-159, and Cys-162. A 'KMSKS' region motif is present at residues 332 to 336 (KMSKS). Residue Lys-335 participates in ATP binding. The tRNA-binding domain maps to 572–673 (DFAKLDLRIA…EGAQPGMRVK (102 aa)).

This sequence belongs to the class-I aminoacyl-tRNA synthetase family. MetG type 1 subfamily. In terms of assembly, homodimer. Zn(2+) is required as a cofactor.

The protein resides in the cytoplasm. It catalyses the reaction tRNA(Met) + L-methionine + ATP = L-methionyl-tRNA(Met) + AMP + diphosphate. Its function is as follows. Is required not only for elongation of protein synthesis but also for the initiation of all mRNA translation through initiator tRNA(fMet) aminoacylation. The sequence is that of Methionine--tRNA ligase from Shewanella loihica (strain ATCC BAA-1088 / PV-4).